A 53-amino-acid polypeptide reads, in one-letter code: ATP synthase protein 8 (53 aa).

The helical transmembrane segment at 5 to 25 (APISWLTLFFVFSITLVIFNI) threads the bilayer.

The protein belongs to the ATPase protein 8 family. In terms of assembly, F-type ATPases have 2 components, CF(1) - the catalytic core - and CF(0) - the membrane proton channel.

Its subcellular location is the mitochondrion membrane. In terms of biological role, mitochondrial membrane ATP synthase (F(1)F(O) ATP synthase or Complex V) produces ATP from ADP in the presence of a proton gradient across the membrane which is generated by electron transport complexes of the respiratory chain. F-type ATPases consist of two structural domains, F(1) - containing the extramembraneous catalytic core and F(0) - containing the membrane proton channel, linked together by a central stalk and a peripheral stalk. During catalysis, ATP synthesis in the catalytic domain of F(1) is coupled via a rotary mechanism of the central stalk subunits to proton translocation. Part of the complex F(0) domain. Minor subunit located with subunit a in the membrane. The chain is ATP synthase protein 8 from Aedes aegypti (Yellowfever mosquito).